A 396-amino-acid polypeptide reads, in one-letter code: Alanine racemase (396 aa).

Lysine 46 acts as the Proton acceptor; specific for D-alanine in catalysis. Lysine 46 bears the N6-(pyridoxal phosphate)lysine mark. Arginine 145 is a substrate binding site. Tyrosine 280 functions as the Proton acceptor; specific for L-alanine in the catalytic mechanism. Residue methionine 328 coordinates substrate.

It belongs to the alanine racemase family. It depends on pyridoxal 5'-phosphate as a cofactor.

The enzyme catalyses L-alanine = D-alanine. It functions in the pathway amino-acid biosynthesis; D-alanine biosynthesis; D-alanine from L-alanine: step 1/1. In terms of biological role, catalyzes the interconversion of L-alanine and D-alanine. May also act on other amino acids. This is Alanine racemase (alr) from Brucella abortus (strain 2308).